Consider the following 788-residue polypeptide: Patatin-like phospholipase domain-containing protein DEHA2B04136g (788 aa).

The chain crosses the membrane as a helical span at residues tryptophan 136 to valine 156. One can recognise a PNPLA domain in the interval leucine 311–asparagine 503. The short motif at glycine 342–glycine 346 is the GXSXG element. Serine 344 (nucleophile) is an active-site residue. The Proton acceptor role is filled by aspartate 490. The span at alanine 662 to serine 672 shows a compositional bias: polar residues. The disordered stretch occupies residues alanine 662–phenylalanine 771. Composition is skewed to acidic residues over residues methionine 690 to valine 705 and glutamate 723 to asparagine 749.

It belongs to the PLPL family.

It is found in the membrane. Probable lipid hydrolase. This is Patatin-like phospholipase domain-containing protein DEHA2B04136g from Debaryomyces hansenii (strain ATCC 36239 / CBS 767 / BCRC 21394 / JCM 1990 / NBRC 0083 / IGC 2968) (Yeast).